A 205-amino-acid polypeptide reads, in one-letter code: Small ribosomal subunit protein uS2 (205 aa).

It belongs to the universal ribosomal protein uS2 family.

The polypeptide is Small ribosomal subunit protein uS2 (rps2) (Aeropyrum pernix (strain ATCC 700893 / DSM 11879 / JCM 9820 / NBRC 100138 / K1)).